Here is a 421-residue protein sequence, read N- to C-terminus: 2',3'-cyclic-nucleotide 3'-phosphodiesterase (421 aa).

Phosphoserine is present on residues serine 6 and serine 9. Tyrosine 110 is subject to Phosphotyrosine. Position 170 is a phosphoserine (serine 170). Histidine 251 serves as the catalytic Proton acceptor. Threonine 253 contacts substrate. The Proton donor role is filled by histidine 330. Residue threonine 332 coordinates substrate. Residue serine 359 is modified to Phosphoserine. At cysteine 418 the chain carries Cysteine methyl ester. The S-farnesyl cysteine moiety is linked to residue cysteine 418. The propeptide at 419–421 is removed in mature form; the sequence is TII.

The protein belongs to the 2H phosphoesterase superfamily. CNPase family. As to quaternary structure, exists as monomers and homodimers.

It is found in the membrane. The protein localises to the melanosome. The enzyme catalyses a nucleoside 2',3'-cyclic phosphate + H2O = a nucleoside 2'-phosphate + H(+). Its function is as follows. Catalyzes the formation of 2'-nucleotide products from 2',3'-cyclic substrates. May participate in RNA metabolism in the myelinating cell, CNP is the third most abundant protein in central nervous system myelin. The polypeptide is 2',3'-cyclic-nucleotide 3'-phosphodiesterase (Homo sapiens (Human)).